Consider the following 434-residue polypeptide: Trigger factor (434 aa).

In terms of domain architecture, PPIase FKBP-type spans 160–245; sequence GDKAKINFVG…LNEVQAANLP (86 aa).

The protein belongs to the FKBP-type PPIase family. Tig subfamily.

The protein resides in the cytoplasm. The enzyme catalyses [protein]-peptidylproline (omega=180) = [protein]-peptidylproline (omega=0). In terms of biological role, involved in protein export. Acts as a chaperone by maintaining the newly synthesized protein in an open conformation. Functions as a peptidyl-prolyl cis-trans isomerase. The sequence is that of Trigger factor from Shewanella halifaxensis (strain HAW-EB4).